A 505-amino-acid polypeptide reads, in one-letter code: Calcium/calmodulin-dependent protein kinase kinase 1 (505 aa).

The interval 26-61 (THLEEADGGPEPTRNGVDPPPRARAASVIPGSTSRL) is disordered. Phosphoserine occurs at positions 67 and 74. R78 is subject to Asymmetric dimethylarginine. Residue S100 is modified to Phosphoserine. T108 is subject to Phosphothreonine. One can recognise a Protein kinase domain in the interval 128 to 409 (YKLQSEIGKG…VPDIKLHPWV (282 aa)). ATP is bound by residues 134-142 (IGKGAYGVV) and K157. Residues 167-189 (QYGFPRRPPPRGSQAAQGGPAKQ) form an RP domain region. The active-site Proton acceptor is D275. Residues 435–440 (KNSVRL) are autoinhibitory domain. Positions 438 to 463 (VRLIPSWTTVILVKSMLRKRSFGNPF) are calmodulin-binding. A phosphoserine mark is found at S458, S475, and S492. Residues 460-505 (GNPFEPQARREERSMSAPGNLLVKEGFGEGGKSPELPGVQEDEAAS) form a disordered region.

The protein belongs to the protein kinase superfamily. Ser/Thr protein kinase family. Interacts with CAMK4 and calmodulin. In terms of processing, appears to be autophosphorylated in a Ca(2+)/calmodulin-dependent manner. Phosphorylated at multiple sites by PRCAKA/PKA. Phosphorylation of Ser-458 is blocked upon binding to Ca(2+)/calmodulin. In vitro, phosphorylated by CAMK1 and CAMK4.

Its subcellular location is the cytoplasm. The protein resides in the nucleus. It carries out the reaction L-seryl-[protein] + ATP = O-phospho-L-seryl-[protein] + ADP + H(+). The catalysed reaction is L-threonyl-[protein] + ATP = O-phospho-L-threonyl-[protein] + ADP + H(+). With respect to regulation, activated by Ca(2+)/calmodulin. Binding of calmodulin may relieve intrasteric autoinhibition. Partially inhibited upon phosphorylation by PRCAKA/PKA. May be regulated through phosphorylation by CAMK1 and CAMK4. Functionally, calcium/calmodulin-dependent protein kinase that belongs to a proposed calcium-triggered signaling cascade involved in a number of cellular processes. Phosphorylates CAMK1, CAMK1D, CAMK1G and CAMK4. Involved in regulating cell apoptosis. Promotes cell survival by phosphorylating AKT1/PKB that inhibits pro-apoptotic BAD/Bcl2-antagonist of cell death. The chain is Calcium/calmodulin-dependent protein kinase kinase 1 (CAMKK1) from Homo sapiens (Human).